The following is a 910-amino-acid chain: MDGNDINIQKNEFSRDQSALLMMDQHSDHKNHESAIGEPGMSYTASQPALSSTEHQTPLVSEASVAAPQNHLNGNSHESVSEMDRNSVDFAIESVLMKARAYNKMGAPKDPRRKQHNPKSEPKIEPHVTDSSDNQAAMSNKMEAEAPKMESNQNYVSNGSEPPFRFVSISNFDEMKTKKKEVQEELKLEVDSDSEEDDVPEQKTPKESDRCGGCGKFTHEDDLIALEEEKKKEKEKPLMSKKKSHHHKKNDFQWIGCDSCQTWYHFLCSGLEQFEYYLYEKFFCPKCVPHTGHSIRYKVVAPHRYRWYSPNEKHLGIEVGSKTWIEDFITRENTVPSPTDDEVCIVEDGYEFRREFEKLGGADNWGKVFMVKDMDGLNMTMPKPGFDLEDVVKIMGSDYEVDTIDVYNQSTYSMKLDTFRKLFRDTKNRPLLYNFLSLEFSDNNEMKEIAKPPRFVQEISMVNRLWPDVSGAEYIKLLQREEYLPEDQRPKVEQFCLAGMAGSYTDFHVDFGGSSVYYHILKGEKIFYIAAPTEQNFAAYQAHETSPDTTTWFGDIANGAVKRVVIKEGQTLLIPAGWIHAVLTPVDSLVFGGNFLHLGNLEMQMRVYHLENAIRKEIRSEEKFYFPNFELLHWMYMRNVLLEKITEANQEGSDMREQEKNIWTASQIMKAEMERWMDRELRLGPEKNAILPTDDKNKIMISVRKQIEIQTKIQNAKNKPMGLKQKRKSRESAERDDEDYCPSSSTAYKKKYTKKAKKDNDDAPKVKKAKKEEVPEEKVPVPEAAGPSEVTAPLTIKIGMGPTEDQKGVVQIFNNQCTSSGRKVKLNQNVADYCGSHLEARVEEIPEKATKSFRELDNELERCEAVHSGEKIKKVKEPKPPKQPKEKKEKPPPKKKEMSSRDRLMKKLKM.

The span at 1–11 (MDGNDINIQKN) shows a compositional bias: polar residues. Disordered stretches follow at residues 1-58 (MDGN…HQTP), 103-162 (NKMG…GSEP), and 183-212 (QEELKLEVDSDSEEDDVPEQKTPKESDRCG). Basic and acidic residues predominate over residues 25–35 (QHSDHKNHESA). A compositionally biased stretch (polar residues) spans 43–58 (YTASQPALSSTEHQTP). Residues 118–130 (PKSEPKIEPHVTD) show a composition bias toward basic and acidic residues. The span at 150–160 (ESNQNYVSNGS) shows a compositional bias: polar residues. The segment covering 200-210 (PEQKTPKESDR) has biased composition (basic and acidic residues). A PHD-type zinc finger spans residues 208–290 (SDRCGGCGKF…KFFCPKCVPH (83 aa)). A JmjC domain is found at 441 to 612 (SDNNEMKEIA…MQMRVYHLEN (172 aa)). Residues 505-510 (TDFHVD), tyrosine 518, lysine 525, and histidine 580 each bind substrate. Fe cation-binding residues include histidine 508 and aspartate 510. Residue histidine 580 coordinates Fe cation. 2 disordered regions span residues 712–790 (KIQN…PSEV) and 864–910 (EAVH…KLKM). Residues 748 to 757 (YKKKYTKKAK) show a composition bias toward basic residues. Residues 758–780 (KDNDDAPKVKKAKKEEVPEEKVP) are compositionally biased toward basic and acidic residues.

The protein belongs to the JHDM1 histone demethylase family. JHDM1D subfamily. Fe(2+) serves as cofactor. As to expression, mainly expressed in neurons. Also weakly expressed in some muscle, intestinal and hypodermal cells.

The protein resides in the nucleus. Its activity is regulated as follows. Competitively inhibited by 2-hydroxyglutarate. In terms of biological role, histone demethylase required for nervous system development. Specifically demethylates dimethylated 'Lys-9', 'Lys-23' and 'Lys-27' (H3K9me2, H3K23me2 and H3K27me2, respectively) of histone H3, thereby playing a central role in histone code. Promotes mitochondrial stress-induced longevity. This Caenorhabditis elegans protein is Lysine-specific demethylase 7 homolog (jmjd-1.2).